The sequence spans 235 residues: MGRAFEYRRASKEARWDKMSKLFPKLAKAIQVAAKEGGADPDMNPKLRSAIATAKANNMPKDNIDAAIKRASGKDSADIKNIHYEGKAAHGALIIVECMSDNPTRTVANVKAIFSKNGGEILQNGSLTFMFSHKAVFHLEKYNGDLEELELDLIDAGLEELDQDDEELRIIGDYTAFGELSNAIEKKALVLKKAGLEYLANNPVSFSEEQLLDIEKLLDKLEDDDDVQAVYTNIE.

It belongs to the TACO1 family.

It localises to the cytoplasm. The sequence is that of Probable transcriptional regulatory protein Cla_1081 from Campylobacter lari (strain RM2100 / D67 / ATCC BAA-1060).